We begin with the raw amino-acid sequence, 503 residues long: NAD(P)H-quinone oxidoreductase chain 4, chloroplastic (503 aa).

Helical transmembrane passes span 3 to 23, 37 to 57, 84 to 104, 113 to 130, 134 to 154, 167 to 187, 208 to 228, 242 to 262, 274 to 294, 305 to 325, 330 to 350, 385 to 405, 416 to 436, and 462 to 482; these read FFPW…IVFF, LCIC…HFQV, GLSV…TLAA, LFHF…GLFA, LFLF…LLSM, FILY…GLTL, ALEI…SPIL, HYST…YGLI, SLFS…AALT, IAYS…SMTD, GALL…FLAG, SLAL…FGII, ILIS…SLSM, and LFLS…PDFV.

This sequence belongs to the complex I subunit 4 family.

The protein localises to the plastid. It localises to the chloroplast thylakoid membrane. It carries out the reaction a plastoquinone + NADH + (n+1) H(+)(in) = a plastoquinol + NAD(+) + n H(+)(out). The enzyme catalyses a plastoquinone + NADPH + (n+1) H(+)(in) = a plastoquinol + NADP(+) + n H(+)(out). The chain is NAD(P)H-quinone oxidoreductase chain 4, chloroplastic from Ipomoea purpurea (Common morning glory).